The chain runs to 326 residues: Phospho-N-acetylmuramoyl-pentapeptide-transferase (326 aa).

The next 9 membrane-spanning stretches (helical) occupy residues 3–23 (ISIS…PAFI), 51–71 (TMGG…FALF), 79–99 (VGMI…DDFL), 115–135 (LALQ…GGDI), 138–158 (VFGY…FWLV), 169–189 (GVDG…GVIA), 195–215 (MDIL…FIFN), 221–243 (VFMG…MALH), and 306–326 (FFFW…LYLM).

The protein belongs to the glycosyltransferase 4 family. MraY subfamily. Requires Mg(2+) as cofactor.

It localises to the cell membrane. The enzyme catalyses UDP-N-acetyl-alpha-D-muramoyl-L-alanyl-gamma-D-glutamyl-L-lysyl-D-alanyl-D-alanine + di-trans,octa-cis-undecaprenyl phosphate = Mur2Ac(oyl-L-Ala-gamma-D-Glu-L-Lys-D-Ala-D-Ala)-di-trans,octa-cis-undecaprenyl diphosphate + UMP. Its pathway is cell wall biogenesis; peptidoglycan biosynthesis. In terms of biological role, catalyzes the initial step of the lipid cycle reactions in the biosynthesis of the cell wall peptidoglycan: transfers peptidoglycan precursor phospho-MurNAc-pentapeptide from UDP-MurNAc-pentapeptide onto the lipid carrier undecaprenyl phosphate, yielding undecaprenyl-pyrophosphoryl-MurNAc-pentapeptide, known as lipid I. This Streptococcus pneumoniae serotype 19F (strain G54) protein is Phospho-N-acetylmuramoyl-pentapeptide-transferase.